The chain runs to 321 residues: Mas-related G-protein coupled receptor member D (321 aa).

The Extracellular segment spans residues methionine 1 to leucine 33. 3 N-linked (GlcNAc...) asparagine glycosylation sites follow: asparagine 2, asparagine 6, and asparagine 16. A helical transmembrane segment spans residues alanine 34–phenylalanine 54. Over arginine 55–asparagine 59 the chain is Cytoplasmic. The helical transmembrane segment at proline 60–alanine 80 threads the bilayer. The Extracellular segment spans residues serine 81–glycine 112. An N-linked (GlcNAc...) asparagine glycan is attached at asparagine 92. The helical transmembrane segment at leucine 113–phenylalanine 133 threads the bilayer. Residues lysine 134–serine 142 are Cytoplasmic-facing. The helical transmembrane segment at alanine 143–phenylalanine 163 threads the bilayer. Topologically, residues cysteine 164–alanine 184 are extracellular. A helical transmembrane segment spans residues leucine 185–valine 205. At arginine 206 to arginine 218 the chain is on the cytoplasmic side. A helical membrane pass occupies residues leucine 219 to isoleucine 239. Residues tyrosine 240–cysteine 257 are Extracellular-facing. The helical transmembrane segment at phenylalanine 258–glycine 280 threads the bilayer. The Cytoplasmic segment spans residues serine 281–alanine 321. The tract at residues glutamate 302 to alanine 321 is disordered.

It belongs to the G-protein coupled receptor 1 family. Mas subfamily.

Its subcellular location is the cell membrane. In terms of biological role, may regulate nociceptor function and/or development, including the sensation or modulation of pain. Functions as a specific membrane receptor for beta-alanine. Beta-alanine at micromolar doses specifically evoked Ca(2+) influx in cells expressing the receptor. Beta-alanine decreases forskolin-stimulated cAMP production in cells expressing the receptor, suggesting that the receptor couples with G-protein G(q) and G(i). In Homo sapiens (Human), this protein is Mas-related G-protein coupled receptor member D (MRGPRD).